The primary structure comprises 152 residues: 3-hydroxyacyl-[acyl-carrier-protein] dehydratase FabZ (152 aa).

His58 is a catalytic residue.

The protein belongs to the thioester dehydratase family. FabZ subfamily.

It is found in the cytoplasm. It carries out the reaction a (3R)-hydroxyacyl-[ACP] = a (2E)-enoyl-[ACP] + H2O. In terms of biological role, involved in unsaturated fatty acids biosynthesis. Catalyzes the dehydration of short chain beta-hydroxyacyl-ACPs and long chain saturated and unsaturated beta-hydroxyacyl-ACPs. This chain is 3-hydroxyacyl-[acyl-carrier-protein] dehydratase FabZ, found in Synechococcus sp. (strain RCC307).